The following is a 227-amino-acid chain: Cytochrome c oxidase subunit 2 (227 aa).

The Mitochondrial intermembrane segment spans residues 1-14 (MAHAAQVGLQDATS). The helical transmembrane segment at 15–45 (PIMEELITFHDHALMIIFLICFLVLYALFLT) threads the bilayer. Residues 46-59 (LTTKLTSTNISDAQ) lie on the Mitochondrial matrix side of the membrane. Residues 60-87 (EMETIWTILPAIILVLIALPSLRILYMT) traverse the membrane as a helical segment. Residues 88-227 (DEINDPSFTI…IFEMGPVFAL (140 aa)) are Mitochondrial intermembrane-facing. Cu cation is bound by residues His161, Cys196, Glu198, Cys200, His204, and Met207. Glu198 is a binding site for Mg(2+).

This sequence belongs to the cytochrome c oxidase subunit 2 family. As to quaternary structure, component of the cytochrome c oxidase (complex IV, CIV), a multisubunit enzyme composed of 14 subunits. The complex is composed of a catalytic core of 3 subunits MT-CO1, MT-CO2 and MT-CO3, encoded in the mitochondrial DNA, and 11 supernumerary subunits COX4I, COX5A, COX5B, COX6A, COX6B, COX6C, COX7A, COX7B, COX7C, COX8 and NDUFA4, which are encoded in the nuclear genome. The complex exists as a monomer or a dimer and forms supercomplexes (SCs) in the inner mitochondrial membrane with NADH-ubiquinone oxidoreductase (complex I, CI) and ubiquinol-cytochrome c oxidoreductase (cytochrome b-c1 complex, complex III, CIII), resulting in different assemblies (supercomplex SCI(1)III(2)IV(1) and megacomplex MCI(2)III(2)IV(2)). Found in a complex with TMEM177, COA6, COX18, COX20, SCO1 and SCO2. Interacts with TMEM177 in a COX20-dependent manner. Interacts with COX20. Interacts with COX16. It depends on Cu cation as a cofactor.

It is found in the mitochondrion inner membrane. It catalyses the reaction 4 Fe(II)-[cytochrome c] + O2 + 8 H(+)(in) = 4 Fe(III)-[cytochrome c] + 2 H2O + 4 H(+)(out). Its function is as follows. Component of the cytochrome c oxidase, the last enzyme in the mitochondrial electron transport chain which drives oxidative phosphorylation. The respiratory chain contains 3 multisubunit complexes succinate dehydrogenase (complex II, CII), ubiquinol-cytochrome c oxidoreductase (cytochrome b-c1 complex, complex III, CIII) and cytochrome c oxidase (complex IV, CIV), that cooperate to transfer electrons derived from NADH and succinate to molecular oxygen, creating an electrochemical gradient over the inner membrane that drives transmembrane transport and the ATP synthase. Cytochrome c oxidase is the component of the respiratory chain that catalyzes the reduction of oxygen to water. Electrons originating from reduced cytochrome c in the intermembrane space (IMS) are transferred via the dinuclear copper A center (CU(A)) of subunit 2 and heme A of subunit 1 to the active site in subunit 1, a binuclear center (BNC) formed by heme A3 and copper B (CU(B)). The BNC reduces molecular oxygen to 2 water molecules using 4 electrons from cytochrome c in the IMS and 4 protons from the mitochondrial matrix. The polypeptide is Cytochrome c oxidase subunit 2 (MT-CO2) (Gorilla gorilla gorilla (Western lowland gorilla)).